A 194-amino-acid polypeptide reads, in one-letter code: Protein cholesin (194 aa).

Residues 1–83 (MAKQKRKVPE…RKKEERQRLR (83 aa)) are disordered. A phosphoserine mark is found at Ser-23 and Ser-59. Basic and acidic residues predominate over residues 61 to 83 (EEQRVLERKLKKERKKEERQRLR). Residues Ser-97 and Ser-175 each carry the phosphoserine modification.

Secreted from the instestine, secretion is induced by feeding and cholesterol absorption.

It is found in the secreted. Hormone secreted from the intestine in response to cholesterol, where it acts to inhibit cholesterol synthesis in the liver and VLDL secretion,leading to a reduction in circulating cholesterol levels. Acts through binding to its receptor, GPR146. The protein is Protein cholesin of Homo sapiens (Human).